We begin with the raw amino-acid sequence, 243 residues long: Probable transcriptional regulatory protein BDI_1233 (243 aa).

It belongs to the TACO1 family.

Its subcellular location is the cytoplasm. This Parabacteroides distasonis (strain ATCC 8503 / DSM 20701 / CIP 104284 / JCM 5825 / NCTC 11152) protein is Probable transcriptional regulatory protein BDI_1233.